Reading from the N-terminus, the 662-residue chain is DCC-interacting protein 13-beta (662 aa).

A required for RAB5A binding region spans residues Met-1 to Val-428. A BAR domain is found at Ala-3–Val-268. In terms of domain architecture, PH spans Leu-277–Arg-375. In terms of domain architecture, PID spans Ser-486 to Asp-635. The tract at residues Asn-642 to Ala-662 is disordered.

As to quaternary structure, homodimer. Homotetramer. Binds RAB5A/Rab5 through an N-terminal domain. This interaction is essential for its recruitment to endosomal membranes as well as its role in cell proliferation. Binds subunits of the NuRD/MeCP1 complex. Interacts with FSHR; interaction is independent of follicle stimulating hormone stimulation. Interacts with APPL1; the interaction is decreased by adiponectin in a time-dependent manner. Forms a complex comprising APPL1, RUVBL2, CTNNB1, HDAC1 and HDAC2; interaction reduces interaction between CTNNB1, HDAC1, HDAC2 and RUVBL2 leading to the decrease of deacetylase activity of this complex; affects the recruitment of repressive complexes to the Wnt target genes. Interacts (via BAR domain) with TBC1D1; interaction is dependent of TBC1D1 phosphorylation at 'Ser-235'; interaction diminishes the phosphorylation of TBC1D1 at 'Thr-596', resulting in inhibition of SLC2A4 translocation and glucose uptake. Interacts with ANXA2; targets APPL2 to endosomes and acting in parallel to RAB5A. Interacts with RAB31 (in GTP-bound form); interaction contributes to or enhances recruitment of APPL2 to the phagosomes; interaction enhances Fc-gamma receptor-mediated phagocytosis through PI3K/Akt signaling in macrophages. Interacts with PIK3R1; forms a complex with PIK3R1 and APPL1. Interacts (via BAR domain) with ADIPOR1; hinders the accessibility of APPL1 to ADIPOR1; negatively regulates adiponectin signaling; ADIPOQ dissociates this interaction and facilitates the recruitment of APPL1 to ADIPOR1. Interacts (via BAR domain) with ADIPOR2; ADIPOQ dissociates this interaction. Expressed in insulin-target tissues including skeletal muscle, liver, fat, and brain. Highly expressed in kidney and pancreas. Abundantly expressed in the ventromedial hypothalamus (VMH), barely detectable in the arcuate nucleus (ARC) and paraventricular nucleus (PVN) of the hypothalamus. Also expressed in pancreatic beta-cells.

It is found in the early endosome membrane. The protein resides in the nucleus. Its subcellular location is the cell membrane. The protein localises to the endosome membrane. It localises to the cytoplasm. It is found in the cytoplasmic vesicle. The protein resides in the phagosome. Its subcellular location is the cell projection. The protein localises to the ruffle. It localises to the ruffle membrane. It is found in the phagosome membrane. Functionally, multifunctional adapter protein that binds to various membrane receptors, nuclear factors and signaling proteins to regulate many processes, such as cell proliferation, immune response, endosomal trafficking and cell metabolism. Regulates signaling pathway leading to cell proliferation through interaction with RAB5A and subunits of the NuRD/MeCP1 complex. Plays a role in immune response by modulating phagocytosis, inflammatory and innate immune responses. In macrophages, enhances Fc-gamma receptor-mediated phagocytosis through interaction with RAB31 leading to activation of PI3K/Akt signaling. In response to LPS, modulates inflammatory responses by playing a key role on the regulation of TLR4 signaling and in the nuclear translocation of RELA/NF-kappa-B p65 and the secretion of pro- and anti-inflammatory cytokines. Also functions as a negative regulator of innate immune response via inhibition of AKT1 signaling pathway by forming a complex with APPL1 and PIK3R1. Plays a role in endosomal trafficking of TGFBR1 from the endosomes to the nucleus. Plays a role in cell metabolism by regulating adiponectin and insulin signaling pathways and adaptative thermogenesis. In muscle, negatively regulates adiponectin-simulated glucose uptake and fatty acid oxidation by inhibiting adiponectin signaling pathway through APPL1 sequestration thereby antagonizing APPL1 action. In muscles, negatively regulates insulin-induced plasma membrane recruitment of GLUT4 and glucose uptake through interaction with TBC1D1. Plays a role in cold and diet-induced adaptive thermogenesis by activating ventromedial hypothalamus (VMH) neurons throught AMPK inhibition which enhances sympathetic outflow to subcutaneous white adipose tissue (sWAT), sWAT beiging and cold tolerance. Also plays a role in other signaling pathways namely Wnt/beta-catenin, HGF and glucocorticoid receptor signaling. Positive regulator of beta-catenin/TCF-dependent transcription through direct interaction with RUVBL2/reptin resulting in the relief of RUVBL2-mediated repression of beta-catenin/TCF target genes by modulating the interactions within the beta-catenin-reptin-HDAC complex. May affect adult neurogenesis in hippocampus and olfactory system via regulating the sensitivity of glucocorticoid receptor. Required for fibroblast migration through HGF cell signaling. The protein is DCC-interacting protein 13-beta of Mus musculus (Mouse).